A 570-amino-acid polypeptide reads, in one-letter code: Arginine--tRNA ligase (570 aa).

A 'HIGH' region motif is present at residues 127–137 (ANPTGPLHLGH).

The protein belongs to the class-I aminoacyl-tRNA synthetase family. In terms of assembly, monomer.

The protein resides in the cytoplasm. The enzyme catalyses tRNA(Arg) + L-arginine + ATP = L-arginyl-tRNA(Arg) + AMP + diphosphate. This is Arginine--tRNA ligase from Neorickettsia sennetsu (strain ATCC VR-367 / Miyayama) (Ehrlichia sennetsu).